The sequence spans 465 residues: MTPSTQDKKLWGGRFAEATDGLVELFNASVGFDQRLAEQDIRGSLAHVAMLGQVGILTSEEVTQISDGLGAVLADIRAGTFEWRLDREDVHMNVEAALRDRIGPVAGKLHTARSRNDQVAVDFRLFTKEAALDLADKTRALRAVMLAEAEKHLAAEVILPGYTHLQVAQPILLAHWFMAYVAMLERDEGRFRDAAERMDESPLGSSALAGTPWPIDRHATATALGFARPTANSLDGVGSRDFALEFLSACAILSAHLSRLSEELIVYSTFEFGFLTLPDSHTTGSSIMPQKKNPDVSELARAKAGRVFGNLMGLLTVVKGTPLAYNKDLQEDKEGVFDSYDTLSIVLRLYTEMLPRTVWHAEVTRAAAARGYSTATDVADFLARQGVPFREAHEVVGGLVGLASRSGRQLWDLTDSELRAAHPLLGAEVAQALTVEQSVRARQSFGGTAPARVSEAIAQAREALG.

This sequence belongs to the lyase 1 family. Argininosuccinate lyase subfamily.

It localises to the cytoplasm. It catalyses the reaction 2-(N(omega)-L-arginino)succinate = fumarate + L-arginine. It functions in the pathway amino-acid biosynthesis; L-arginine biosynthesis; L-arginine from L-ornithine and carbamoyl phosphate: step 3/3. This Deinococcus deserti (strain DSM 17065 / CIP 109153 / LMG 22923 / VCD115) protein is Argininosuccinate lyase.